A 427-amino-acid polypeptide reads, in one-letter code: Chaperone SurA (427 aa).

The first 19 residues, 1 to 19, serve as a signal peptide directing secretion; that stretch reads MKIWKSILFTTLLSCGAVA. 2 PpiC domains span residues 170–268 and 277–377; these read TVQY…KIED and VTEV…EVLD.

The protein resides in the periplasm. The enzyme catalyses [protein]-peptidylproline (omega=180) = [protein]-peptidylproline (omega=0). Its function is as follows. Chaperone involved in the correct folding and assembly of outer membrane proteins. Recognizes specific patterns of aromatic residues and the orientation of their side chains, which are found more frequently in integral outer membrane proteins. May act in both early periplasmic and late outer membrane-associated steps of protein maturation. This chain is Chaperone SurA, found in Vibrio parahaemolyticus serotype O3:K6 (strain RIMD 2210633).